The following is a 435-amino-acid chain: Probable exopolygalacturonase B (435 aa).

The signal sequence occupies residues 1-15; the sequence is MKFFTAALFASAVSA. N59, N184, and N224 each carry an N-linked (GlcNAc...) asparagine glycan. Catalysis depends on D254, which acts as the Proton donor. C256 and C273 are disulfide-bonded. N262 and N274 each carry an N-linked (GlcNAc...) asparagine glycan. H277 is a catalytic residue. 4 N-linked (GlcNAc...) asparagine glycosylation sites follow: N301, N328, N365, and N368. C391 and C397 are disulfide-bonded.

The protein belongs to the glycosyl hydrolase 28 family.

The protein resides in the secreted. It carries out the reaction [(1-&gt;4)-alpha-D-galacturonosyl](n) + H2O = alpha-D-galacturonate + [(1-&gt;4)-alpha-D-galacturonosyl](n-1). Specific in hydrolyzing the terminal glycosidic bond of polygalacturonic acid and oligogalacturonates. The chain is Probable exopolygalacturonase B (pgxB) from Aspergillus terreus (strain NIH 2624 / FGSC A1156).